The sequence spans 230 residues: Ureidoacrylate amidohydrolase RutB (230 aa).

The active-site Proton acceptor is Asp-24. Lys-133 is an active-site residue. Cys-166 acts as the Nucleophile in catalysis.

The protein belongs to the isochorismatase family. RutB subfamily.

It catalyses the reaction (Z)-3-ureidoacrylate + H2O + H(+) = (Z)-3-aminoacrylate + NH4(+) + CO2. The catalysed reaction is (Z)-3-ureidoacrylate + H2O = (Z)-3-aminoacrylate + carbamate + H(+). It carries out the reaction (Z)-2-methylureidoacrylate + H2O + H(+) = (Z)-2-methylaminoacrylate + NH4(+) + CO2. In terms of biological role, hydrolyzes ureidoacrylate to form aminoacrylate and carbamate. The carbamate hydrolyzes spontaneously, thereby releasing one of the nitrogen atoms of the pyrimidine ring as ammonia and one of its carbon atoms as CO2. This Enterobacter sp. (strain 638) protein is Ureidoacrylate amidohydrolase RutB.